Here is a 293-residue protein sequence, read N- to C-terminus: Short-chain dehydrogenase/reductase PhomF (293 aa).

Positions 31 and 102 each coordinate NADP(+). Residue Ser-175 is the Proton donor of the active site. Residues Tyr-190, Lys-194, and Ser-225 each coordinate NADP(+). Residue Tyr-190 is the Proton acceptor of the active site. Catalysis depends on Lys-194, which acts as the Lowers pKa of active site Tyr.

Belongs to the short-chain dehydrogenases/reductases (SDR) family.

Its function is as follows. Short-chain dehydrogenase/reductase; part of the gene cluster that mediates the biosynthesis of the phomopsins, a group of hexapeptide mycotoxins which infects lupins and causes lupinosis disease in livestock. The role of phomF within the phomopsins biosynthesis pathway has still to be determined. The pathway starts with the processing of the precursor phomA by several endopeptidases including kexin proteases as well as the cluster-specific S41 family peptidase phomP1 and the oligopeptidase phomG to produce 10 identical copies of the hexapeptide Tyr-Val-Ile-Pro-Ile-Asp. After being excised from the precursor peptide, the core peptides are cyclized and modified post-translationally by enzymes encoded within the gene cluster. The timing and order of proteolysis of the phomA precursor and PTMs are still unknown. Two tyrosinase-like enzymes, phomQ1 and phomQ2, catalyze the chlorination and hydroxylation of Tyr, respectively. PhomYb, is proposed to be involved in the construction of the macrocyclic structure. The other 4 ustYa family proteins may be involved in PTMs that generate the unique structure of phomopsin A. PhomYa is required for the hydroxylation of C-beta of Tyr. PhomYc, phomYd, and phomYe are responsible for the biosynthesis of 2,3-dehydroisoleucine (dIle), 2,3-dehydroaspartic acid (dAsp), and 3,4-dehydroproline (dPro), respectively. While dIle formation by phomYc is indispensable for the installation of dAsp by phomYd, the order of the other PTMs have not been elucidated yet. Most of the biosynthetic enzymes likely have broad substrate specificity, and thus, there might be a metabolic grid from a precursor to phomopsin A. The enzyme(s) responsible for the biosynthesis of 3,4-dehydrovaline (dVal) have also not been identified yet. Finally, phomM acts as an S-adenosylmethionine-dependent alpha-N-methyltransferase that catalyzes two successive N-methylation reactions, converting N-desmethyl-phomopsin A to phomopsin A and phomopsin A further to an N,N-dimethylated congener called phomopsin E. The polypeptide is Short-chain dehydrogenase/reductase PhomF (Diaporthe leptostromiformis (Lupinosis disease fungus)).